Reading from the N-terminus, the 320-residue chain is Lipoyl synthase (320 aa).

Residues 1–27 form a disordered region; that stretch reads MRVEIDHRNSGGGKLRHPEKQHRPDNP. Over residues 16–25 the composition is skewed to basic and acidic residues; sequence RHPEKQHRPD. 7 residues coordinate [4Fe-4S] cluster: Cys-61, Cys-66, Cys-72, Cys-87, Cys-91, Cys-94, and Ser-300. The Radical SAM core domain occupies 73–289; that stretch reads WSQRHATMMI…AAMARAKGFL (217 aa).

This sequence belongs to the radical SAM superfamily. Lipoyl synthase family. [4Fe-4S] cluster serves as cofactor.

The protein resides in the cytoplasm. It catalyses the reaction [[Fe-S] cluster scaffold protein carrying a second [4Fe-4S](2+) cluster] + N(6)-octanoyl-L-lysyl-[protein] + 2 oxidized [2Fe-2S]-[ferredoxin] + 2 S-adenosyl-L-methionine + 4 H(+) = [[Fe-S] cluster scaffold protein] + N(6)-[(R)-dihydrolipoyl]-L-lysyl-[protein] + 4 Fe(3+) + 2 hydrogen sulfide + 2 5'-deoxyadenosine + 2 L-methionine + 2 reduced [2Fe-2S]-[ferredoxin]. It functions in the pathway protein modification; protein lipoylation via endogenous pathway; protein N(6)-(lipoyl)lysine from octanoyl-[acyl-carrier-protein]: step 2/2. Catalyzes the radical-mediated insertion of two sulfur atoms into the C-6 and C-8 positions of the octanoyl moiety bound to the lipoyl domains of lipoate-dependent enzymes, thereby converting the octanoylated domains into lipoylated derivatives. This chain is Lipoyl synthase, found in Acidiphilium cryptum (strain JF-5).